The following is a 478-amino-acid chain: NADH-quinone oxidoreductase subunit N 1 (478 aa).

14 consecutive transmembrane segments (helical) span residues 6 to 26, 33 to 53, 71 to 91, 99 to 119, 121 to 141, 156 to 176, 193 to 212, 244 to 264, 265 to 285, 299 to 319, 321 to 341, 364 to 384, 388 to 408, and 438 to 458; these read TVLP…SGVF, FAIT…LVAA, FADV…VTFN, FEFP…VSAS, LITL…LAAF, FVLG…VYGF, PTAA…GLAF, IAVF…VLGQ, WRDL…IGAI, IGHM…GVSG, LIYL…IIAM, FAFV…LAGF, FYVF…LGII, and AGVS…VFHP.

The protein belongs to the complex I subunit 2 family. NDH-1 is composed of 14 different subunits. Subunits NuoA, H, J, K, L, M, N constitute the membrane sector of the complex.

It localises to the cell inner membrane. The catalysed reaction is a quinone + NADH + 5 H(+)(in) = a quinol + NAD(+) + 4 H(+)(out). NDH-1 shuttles electrons from NADH, via FMN and iron-sulfur (Fe-S) centers, to quinones in the respiratory chain. The immediate electron acceptor for the enzyme in this species is believed to be ubiquinone. Couples the redox reaction to proton translocation (for every two electrons transferred, four hydrogen ions are translocated across the cytoplasmic membrane), and thus conserves the redox energy in a proton gradient. This Acidiphilium cryptum (strain JF-5) protein is NADH-quinone oxidoreductase subunit N 1.